A 510-amino-acid chain; its full sequence is Global transcription regulator sge1 (510 aa).

3 disordered regions span residues 94 to 152 (PPGE…ASRN), 393 to 438 (HPFM…QQHS), and 469 to 510 (LGGT…MGRL). Low complexity predominate over residues 123 to 143 (NTGMNGTATGANAANLSSAGS). Composition is skewed to polar residues over residues 471–480 (GTNTDQSQPF) and 501–510 (PGSNNSMGRL).

It belongs to the MIT1/WOR1 family.

The protein localises to the nucleus. Functionally, global transcriptional regulator of pathogenicity. Differentially regulates expression of effector genes. Also required for radial growth and production of asexual conidiospores, and plays a role in mycelium pigmentation. Not required for induction of Ave1, the effector that activates resistance mediated by the Ve1 immune receptor in tomato. The polypeptide is Global transcription regulator sge1 (Verticillium dahliae (strain VdLs.17 / ATCC MYA-4575 / FGSC 10137) (Verticillium wilt)).